The following is a 306-amino-acid chain: Pyridoxal 5'-phosphate synthase subunit PdxS (306 aa).

D36 is a D-ribose 5-phosphate binding site. The active-site Schiff-base intermediate with D-ribose 5-phosphate is K93. A D-ribose 5-phosphate-binding site is contributed by G165. Position 177 (R177) interacts with D-glyceraldehyde 3-phosphate. D-ribose 5-phosphate contacts are provided by residues G226 and 247-248; that span reads GS.

It belongs to the PdxS/SNZ family. As to quaternary structure, in the presence of PdxT, forms a dodecamer of heterodimers.

It catalyses the reaction aldehydo-D-ribose 5-phosphate + D-glyceraldehyde 3-phosphate + L-glutamine = pyridoxal 5'-phosphate + L-glutamate + phosphate + 3 H2O + H(+). It functions in the pathway cofactor biosynthesis; pyridoxal 5'-phosphate biosynthesis. Functionally, catalyzes the formation of pyridoxal 5'-phosphate from ribose 5-phosphate (RBP), glyceraldehyde 3-phosphate (G3P) and ammonia. The ammonia is provided by the PdxT subunit. Can also use ribulose 5-phosphate and dihydroxyacetone phosphate as substrates, resulting from enzyme-catalyzed isomerization of RBP and G3P, respectively. The protein is Pyridoxal 5'-phosphate synthase subunit PdxS of Salinispora tropica (strain ATCC BAA-916 / DSM 44818 / JCM 13857 / NBRC 105044 / CNB-440).